Here is a 674-residue protein sequence, read N- to C-terminus: Inorganic pyrophosphatase TTM2 (674 aa).

The region spanning 248 to 410 is the CYTH domain; it reads SPTYILKSRK…PRTYIEQIQL (163 aa). Disordered regions lie at residues 457 to 498 and 619 to 640; these read KNLK…SPAN and RSRL…SKSS. Residues 484-496 show a composition bias toward basic and acidic residues; that stretch reads SDRRYEERNHDSP. Residues 623-640 are compositionally biased toward low complexity; the sequence is ARTGSSNSGNRGRSSKSS. The chain crosses the membrane as a helical span at residues 650–670; it reads LPLVLTVAICSIGIIVIKSYI.

The cofactor is Mg(2+). As to expression, predominantly expressed in the shoot apices of inflorescences.

Its subcellular location is the mitochondrion outer membrane. It carries out the reaction diphosphate + H2O = 2 phosphate + H(+). In terms of biological role, exhibits pyrophosphatase activity with stronger affinity for pyrophosphate (PPi), moderate affinity for ATP and ADP, and weak affinity for tripolyphosphate (PPPi). No activity observed toward uridine substrate. Negative regulator of the salicylic acid (SA)-mediated amplification of defense responses against both virulent and avirulent pathogens, including oomycetes (e.g. H.arabidopsidis) and bacteria (e.g. P.syringae). Represses systemic acquired resistance (SAR). This Arabidopsis thaliana (Mouse-ear cress) protein is Inorganic pyrophosphatase TTM2.